The primary structure comprises 357 residues: Aspartate carbamoyltransferase catalytic subunit (357 aa).

Over residues 1-17 (MSNSIDSQSIPTISPTD) the composition is skewed to polar residues. The disordered stretch occupies residues 1–21 (MSNSIDSQSIPTISPTDYTKF). The carbamoyl phosphate site is built by arginine 97 and threonine 98. Lysine 125 is an L-aspartate binding site. Residues arginine 147, histidine 177, and glutamine 180 each coordinate carbamoyl phosphate. Positions 211 and 266 each coordinate L-aspartate. Residues glycine 307 and proline 308 each contribute to the carbamoyl phosphate site.

This sequence belongs to the aspartate/ornithine carbamoyltransferase superfamily. ATCase family. Heterododecamer (2C3:3R2) of six catalytic PyrB chains organized as two trimers (C3), and six regulatory PyrI chains organized as three dimers (R2).

It catalyses the reaction carbamoyl phosphate + L-aspartate = N-carbamoyl-L-aspartate + phosphate + H(+). The protein operates within pyrimidine metabolism; UMP biosynthesis via de novo pathway; (S)-dihydroorotate from bicarbonate: step 2/3. Functionally, catalyzes the condensation of carbamoyl phosphate and aspartate to form carbamoyl aspartate and inorganic phosphate, the committed step in the de novo pyrimidine nucleotide biosynthesis pathway. In Psychrobacter arcticus (strain DSM 17307 / VKM B-2377 / 273-4), this protein is Aspartate carbamoyltransferase catalytic subunit.